We begin with the raw amino-acid sequence, 78 residues long: Exodeoxyribonuclease 7 small subunit (78 aa).

This sequence belongs to the XseB family. In terms of assembly, heterooligomer composed of large and small subunits.

It localises to the cytoplasm. The catalysed reaction is Exonucleolytic cleavage in either 5'- to 3'- or 3'- to 5'-direction to yield nucleoside 5'-phosphates.. Its function is as follows. Bidirectionally degrades single-stranded DNA into large acid-insoluble oligonucleotides, which are then degraded further into small acid-soluble oligonucleotides. This chain is Exodeoxyribonuclease 7 small subunit, found in Synechococcus sp. (strain JA-3-3Ab) (Cyanobacteria bacterium Yellowstone A-Prime).